The chain runs to 178 residues: Large ribosomal subunit protein bL25 (178 aa).

Belongs to the bacterial ribosomal protein bL25 family. CTC subfamily. Part of the 50S ribosomal subunit; part of the 5S rRNA/L5/L18/L25 subcomplex. Contacts the 5S rRNA. Binds to the 5S rRNA independently of L5 and L18.

In terms of biological role, this is one of the proteins that binds to the 5S RNA in the ribosome where it forms part of the central protuberance. The protein is Large ribosomal subunit protein bL25 of Helicobacter pylori (strain ATCC 700392 / 26695) (Campylobacter pylori).